Reading from the N-terminus, the 1108-residue chain is MLRGQSLPWRAALHQTPRPTVLRPLLPFARNNGPVRSNLSISRLSRSPSLSPRAFSTSSIRRKEKPPSDEKEDSNLQEQKDPNEQKDSDRSPEGRRRSPDSTGREPGAPTSASGRRRDKVAGEKEQRGVEEDAKKENVSIEGKSDPTEDPSPIPVNGGGSSDTKSSASNGGNEDGGRKGKKGSGDRALQKPSVPEVYPQVMAIPIAKRPLFPGFYKAITIRDPNVATAIQEMMKRGQPYVGAFLFKDENADGDVIENLDDVYDVGVFAQITAAYPLRGEASGVTAVLYPHRRIKISSLLPPGEQSKAGNTEDKAPEKKGDVVASFEEGVAEPAPKDLYEPTSFLRKYPVSLVNVENLAEEPFDKKSAIIRAVTSEIVNVCKEIASLNPLFRDQISAFYTDQFPGNLSDEPAKLADFAAAVSAGELHEMQEVLEIMNIEERLPKALVVLKKELMNAQLQSKISKDVEAKIQKRQREYWLMEQMKGIKRELGIESDGKDKLVEKFKEKASKLAMPDAVKKVFDEEINKLAHLEPAASEFNVTRNYLDWLTQIPWGQKSVENFGIKHAMTVLDEDHYGLKDVKDRILEFIAVGKLRGTVEGKILCLVGPPGVGKTSIGKSIARALNRQYYRFSVGGLTDVAEIKGHRRTYVGALPGRIIQALKKCQTENPLILIDEVDKIGRGHQGDPSSALLELLDPEQNSSFLDHYMDVPVDLSKVLFVCTANVTDTIPRPLLDRMELIELSGYVADEKMAIAERYLAPAARELTGLKDVDVNLQKDAIEELIKSYARESGVRNLKKQIEKVYRKAAFKIVQDLGEEVLGEDKALTDEGKAAQEESKKETEEGDPKDPPADPEKSTTETPRLALKVPESVHLSIGKDSLTDYLGPPVFTADRLYDTFPPGVTMGLAWTSMGGAALYVESILENALTPESRPGIDITGNLQPVMKESTQIAYSFAKSVLAKQFPENKFFEKAKLHMHCPEGAVPKDGPSAGITMATSLLSLALDHPLDPTIAMTGELTVTGKVLRIGGLREKTVAARRAGAKKIIFPADNMSDWLELPENIKDGIEGHAVSWYSEVFNILFAELDKDAANKLWQKQLAGKPKKGPLEEDD.

The transit peptide at 1 to 62 (MLRGQSLPWR…RAFSTSSIRR (62 aa)) directs the protein to the mitochondrion. Disordered stretches follow at residues 24-192 (PLLP…QKPS) and 299-318 (LPPG…PEKK). Positions 36–53 (RSNLSISRLSRSPSLSPR) are enriched in low complexity. Basic and acidic residues-rich tracts occupy residues 78–103 (EQKD…DSTG) and 119–146 (KVAG…KSDP). Residues 161–171 (SDTKSSASNGG) show a composition bias toward polar residues. Basic and acidic residues-rich tracts occupy residues 174–188 (DGGR…DRAL) and 309–318 (NTEDKAPEKK). In terms of domain architecture, Lon N-terminal spans 200–452 (VMAIPIAKRP…KALVVLKKEL (253 aa)). Residue 605-612 (GPPGVGKT) coordinates ATP. Residues 821–855 (DKALTDEGKAAQEESKKETEEGDPKDPPADPEKST) are compositionally biased toward basic and acidic residues. The interval 821 to 862 (DKALTDEGKAAQEESKKETEEGDPKDPPADPEKSTTETPRLA) is disordered. The region spanning 895-1081 (TFPPGVTMGL…SEVFNILFAE (187 aa)) is the Lon proteolytic domain. Residues Ser987 and Lys1030 contribute to the active site.

The protein belongs to the peptidase S16 family. As to quaternary structure, homohexamer or homoheptamer. Organized in a ring with a central cavity.

The protein resides in the mitochondrion matrix. The enzyme catalyses Hydrolysis of proteins in presence of ATP.. Functionally, ATP-dependent serine protease that mediates the selective degradation of misfolded, unassembled or oxidatively damaged polypeptides as well as certain short-lived regulatory proteins in the mitochondrial matrix. May also have a chaperone function in the assembly of inner membrane protein complexes. Participates in the regulation of mitochondrial gene expression and in the maintenance of the integrity of the mitochondrial genome. Binds to mitochondrial DNA in a site-specific manner. In Aspergillus fumigatus (strain ATCC MYA-4609 / CBS 101355 / FGSC A1100 / Af293) (Neosartorya fumigata), this protein is Lon protease homolog, mitochondrial (pim1).